We begin with the raw amino-acid sequence, 220 residues long: Imidazoleglycerol-phosphate dehydratase (220 aa).

Substrate is bound by residues Glu14, 64-72, 90-94, Arg116, and Arg138; these read HMIHALAKH and HHTTE. The Mn(2+) site is built by His64, His90, His91, and Glu94. Mn(2+)-binding residues include His162, His186, His187, and Glu190. Substrate contacts are provided by residues 186–194 and 214–216; these read HHRSESAFK and STK.

This sequence belongs to the imidazoleglycerol-phosphate dehydratase family. Mn(2+) serves as cofactor.

It catalyses the reaction D-erythro-1-(imidazol-4-yl)glycerol 3-phosphate = 3-(imidazol-4-yl)-2-oxopropyl phosphate + H2O. It functions in the pathway amino-acid biosynthesis; L-histidine biosynthesis; L-histidine from 5-phospho-alpha-D-ribose 1-diphosphate: step 6/9. The polypeptide is Imidazoleglycerol-phosphate dehydratase (Saccharomyces cerevisiae (strain ATCC 204508 / S288c) (Baker's yeast)).